A 274-amino-acid polypeptide reads, in one-letter code: F-box protein SKIP5 (274 aa).

The 48-residue stretch at 32–79 (LTSLNNLDDGCLMHILSFLSPIPDRYNTALVCHRWRYLACHPRLWLRV) folds into the F-box domain.

Part of a SCF (SKP1-cullin-F-box) protein ligase complex. Interacts with SKP1A/ASK1.

Its pathway is protein modification; protein ubiquitination. The chain is F-box protein SKIP5 (SKIP5) from Arabidopsis thaliana (Mouse-ear cress).